The chain runs to 223 residues: Translation initiation factor 6 (223 aa).

Belongs to the eIF-6 family.

Its function is as follows. Binds to the 50S ribosomal subunit and prevents its association with the 30S ribosomal subunit to form the 70S initiation complex. The polypeptide is Translation initiation factor 6 (Methanobrevibacter smithii (strain ATCC 35061 / DSM 861 / OCM 144 / PS)).